The sequence spans 217 residues: Ras-like protein (217 aa).

GTP is bound at residue 17-24 (GGGGVGKS). An Effector region motif is present at residues 39–47 (YDPTIEDSY). GTP is bound by residues 64–68 (DTAGQ) and 123–126 (NKCD). A disordered region spans residues 181–200 (TGRMMTGGGGGGPPGTYAGK). Residues 185–194 (MTGGGGGGPP) show a composition bias toward gly residues. 2 S-palmitoyl cysteine lipidation sites follow: Cys-210 and Cys-211. At Cys-214 the chain carries Cysteine methyl ester. Cys-214 is lipidated: S-geranylgeranyl cysteine. The propeptide at 215-217 (VVL) is removed in mature form.

It belongs to the small GTPase superfamily. Ras family.

The protein localises to the cell membrane. It carries out the reaction GTP + H2O = GDP + phosphate + H(+). With respect to regulation, alternates between an inactive form bound to GDP and an active form bound to GTP. Activated by a guanine nucleotide-exchange factor (GEF) and inactivated by a GTPase-activating protein (GAP). The sequence is that of Ras-like protein from Lentinula edodes (Shiitake mushroom).